Consider the following 423-residue polypeptide: Maltoporin 1 (423 aa).

Residues 1-24 (MITLRKLPIALAVAAGVLSTQAMA) form the signal peptide.

This sequence belongs to the porin LamB (TC 1.B.3) family. In terms of assembly, homotrimer formed of three 18-stranded antiparallel beta-barrels, containing three independent channels.

The protein localises to the cell outer membrane. It catalyses the reaction beta-maltose(in) = beta-maltose(out). Involved in the transport of maltose and maltodextrins. The protein is Maltoporin 1 of Yersinia pestis bv. Antiqua (strain Antiqua).